Consider the following 437-residue polypeptide: GTP-binding protein ERG (437 aa).

Positions Q39–E50 are enriched in polar residues. The segment at Q39–P65 is disordered. Positions D51 to S62 are enriched in low complexity. 2 positions are modified to phosphoserine: S111 and S112. The Era-type G domain occupies K152–W333. Positions G160–S167 are G1. G160 to S167 lines the GTP pocket. Positions N186–H190 are G2. The G3 stretch occupies residues D207–G210. Residues D207 to L211 and N279 to D282 each bind GTP. The G4 stretch occupies residues N279–D282. Residues I309–G311 form a G5 region. One can recognise a KH type-2 domain in the interval V361 to K437.

Belongs to the TRAFAC class TrmE-Era-EngA-EngB-Septin-like GTPase superfamily. Era GTPase family.

Functionally, has a crucial role in plant growth and development, possibly by influencing mitochondrial division. The chain is GTP-binding protein ERG (ERG) from Arabidopsis thaliana (Mouse-ear cress).